The sequence spans 556 residues: Zinc finger protein 18 (556 aa).

Residues 41–123 (RQLFRQFRYQ…TLVESLKGDP (83 aa)) enclose the SCAN box domain. A disordered region spans residues 169 to 195 (QDLPLQNTSSAPGELLSHGVKEESDLE). A KRAB domain is found at 218-291 (EVGTALLPSL…HLHSAEKMAR (74 aa)). C2H2-type zinc fingers lie at residues 415 to 437 (PTCR…QRTH), 443 to 465 (FHCR…QRTH), 471 to 493 (CKCD…EKIH), 499 to 521 (YKCP…QRVH), and 527 to 549 (YKCT…QRSH).

The protein belongs to the krueppel C2H2-type zinc-finger protein family.

Its subcellular location is the nucleus. In terms of biological role, may be involved in transcriptional regulation. The chain is Zinc finger protein 18 (Znf18) from Rattus norvegicus (Rat).